The following is a 79-amino-acid chain: Cytochrome b (79 aa).

Transmembrane regions (helical) follow at residues 1–7 (SALFLAM), 31–52 (WLIR…YLHI), and 67–79 (WNIG…LTMA). Heme b is bound by residues His-37 and His-51.

The protein belongs to the cytochrome b family. The cytochrome bc1 complex contains 11 subunits: 3 respiratory subunits (MT-CYB, CYC1 and UQCRFS1), 2 core proteins (UQCRC1 and UQCRC2) and 6 low-molecular weight proteins (UQCRH/QCR6, UQCRB/QCR7, UQCRQ/QCR8, UQCR10/QCR9, UQCR11/QCR10 and a cleavage product of UQCRFS1). This cytochrome bc1 complex then forms a dimer. Requires heme b as cofactor.

It is found in the mitochondrion inner membrane. Its function is as follows. Component of the ubiquinol-cytochrome c reductase complex (complex III or cytochrome b-c1 complex) that is part of the mitochondrial respiratory chain. The b-c1 complex mediates electron transfer from ubiquinol to cytochrome c. Contributes to the generation of a proton gradient across the mitochondrial membrane that is then used for ATP synthesis. The chain is Cytochrome b (MT-CYB) from Dipodomys heermanni (Heermann's kangaroo rat).